The chain runs to 135 residues: S-adenosylmethionine decarboxylase proenzyme (135 aa).

The Schiff-base intermediate with substrate; via pyruvic acid role is filled by Ser63. Ser63 carries the pyruvic acid (Ser); by autocatalysis modification. His68 acts as the Proton acceptor; for processing activity in catalysis. Cys83 acts as the Proton donor; for catalytic activity in catalysis.

The protein belongs to the prokaryotic AdoMetDC family. Type 1 subfamily. In terms of assembly, heterotetramer of two alpha and two beta chains arranged as a dimer of alpha/beta heterodimers. The cofactor is pyruvate. Is synthesized initially as an inactive proenzyme. Formation of the active enzyme involves a self-maturation process in which the active site pyruvoyl group is generated from an internal serine residue via an autocatalytic post-translational modification. Two non-identical subunits are generated from the proenzyme in this reaction, and the pyruvate is formed at the N-terminus of the alpha chain, which is derived from the carboxyl end of the proenzyme. The post-translation cleavage follows an unusual pathway, termed non-hydrolytic serinolysis, in which the side chain hydroxyl group of the serine supplies its oxygen atom to form the C-terminus of the beta chain, while the remainder of the serine residue undergoes an oxidative deamination to produce ammonia and the pyruvoyl group blocking the N-terminus of the alpha chain.

It carries out the reaction S-adenosyl-L-methionine + H(+) = S-adenosyl 3-(methylsulfanyl)propylamine + CO2. The protein operates within amine and polyamine biosynthesis; S-adenosylmethioninamine biosynthesis; S-adenosylmethioninamine from S-adenosyl-L-methionine: step 1/1. Its function is as follows. Catalyzes the decarboxylation of S-adenosylmethionine to S-adenosylmethioninamine (dcAdoMet), the propylamine donor required for the synthesis of the polyamines spermine and spermidine from the diamine putrescine. The polypeptide is S-adenosylmethionine decarboxylase proenzyme (Thermodesulfovibrio yellowstonii (strain ATCC 51303 / DSM 11347 / YP87)).